A 474-amino-acid chain; its full sequence is Glycogen synthase (474 aa).

Residue Lys-15 participates in ADP-alpha-D-glucose binding.

It belongs to the glycosyltransferase 1 family. Bacterial/plant glycogen synthase subfamily.

The enzyme catalyses [(1-&gt;4)-alpha-D-glucosyl](n) + ADP-alpha-D-glucose = [(1-&gt;4)-alpha-D-glucosyl](n+1) + ADP + H(+). It functions in the pathway glycan biosynthesis; glycogen biosynthesis. In terms of biological role, synthesizes alpha-1,4-glucan chains using ADP-glucose. This chain is Glycogen synthase, found in Chlamydia trachomatis serovar L2b (strain UCH-1/proctitis).